Reading from the N-terminus, the 172-residue chain is Small integral membrane protein 23 (172 aa).

The Cytoplasmic segment spans residues 1–36 (MATQQVDSRRQVAAEQVAAQLLERRRGSHCDDEKQT). Residues 37–53 (LLALLILVLYLSTEIWG) traverse the membrane as a helical; Signal-anchor for type II membrane protein segment. Residues 54-172 (SSWEVSERIR…LEISLSGAEL (119 aa)) are Extracellular-facing. Residues 96–128 (LKEKLHVFSEKLEEEVQQLEQLAWDLELWLDAL) adopt a coiled-coil conformation.

The protein resides in the cell membrane. The sequence is that of Small integral membrane protein 23 (SMIM23) from Homo sapiens (Human).